An 861-amino-acid polypeptide reads, in one-letter code: Extra-large guanine nucleotide-binding protein 2 (861 aa).

Disordered stretches follow at residues 1–32 and 121–168; these read MAAV…TSSG and VSGS…DDRV. Residues 131-143 are compositionally biased toward basic and acidic residues; sequence KRLDVPEEVKSPA. Positions 146–156 are enriched in low complexity; that stretch reads RLSPSSPLSAS. Residues 157–168 are compositionally biased toward basic and acidic residues; that stretch reads AREEDHLDDDRV. Positions 204–211 match the Nuclear localization signal motif; it reads RAERKGKR. The RING-type; degenerate zinc finger occupies 214–257; sequence CYRCQLGNRFTEKEVCIVCDAKYCFNCVRRAMGAMPEGRKCQAC. Positions 461 to 853 constitute a G-alpha domain; that stretch reads MLNKLLLIGS…TSMFQEMSTT (393 aa). Residues 464 to 477 form a G1 motif region; it reads KLLLIGSEKGGATT. GTP is bound at residue 469–477; that stretch reads GSEKGGATT. Thr476 lines the Ca(2+) pocket. The interval 523–545 is disordered; it reads EMSNDQSSGNVGDETSAKPGNSI. 624–632 lines the GTP pocket; that stretch reads DILQAEGLS. The interval 624–632 is G2 motif; it reads DILQAEGLS. Ser632 is a Ca(2+) binding site. Positions 665–674 are G3 motif; it reads YQLIRLNPRS. Residues 737 to 744 are G4 motif; it reads LLVLTKFD. 741-744 is a GTP binding site; that stretch reads TKFD. A G5 motif region spans residues 818 to 823; the sequence is QVSLES.

The protein belongs to the G-alpha family. XLG subfamily. Interacts with GB1. Component of a G-protein complex at least composed of XLG2 and GB1. Interacts with RTV1. It depends on Ca(2+) as a cofactor. Ubiquitous. Strongly expressed in vascular tissues, root and shoot meristems and lateral root primordia.

It localises to the nucleus. Guanine nucleotide-binding proteins (G proteins) are involved as modulators or transducers in various transmembrane signaling systems. Binds GTP with specificity. Plays a role in the root morphogenesis by regulation of the cell proliferation. Acts as a positive regulator in resistance to pathogen that triggers the salicylic acid (SA) pathway. Promotes the DNA binding activity of RTV1 specifically to promoter regions of FT and SOC1 in vivo leading to the activation of floral integrator genes. The chain is Extra-large guanine nucleotide-binding protein 2 (XLG2) from Arabidopsis thaliana (Mouse-ear cress).